A 94-amino-acid chain; its full sequence is Large ribosomal subunit protein bL27 (94 aa).

The propeptide occupies 1-9; the sequence is MLKMNLQFF.

This sequence belongs to the bacterial ribosomal protein bL27 family. The N-terminus is cleaved by ribosomal processing cysteine protease Prp.

The chain is Large ribosomal subunit protein bL27 from Halalkalibacterium halodurans (strain ATCC BAA-125 / DSM 18197 / FERM 7344 / JCM 9153 / C-125) (Bacillus halodurans).